A 214-amino-acid polypeptide reads, in one-letter code: Refilin-B (214 aa).

The interval 1 to 56 (MVGRLSLQDVPELVDAKKKGDGVLDSPDSGLPPSPSPSHWGLAAGGGGGERAAAPG) is disordered. Phosphoserine is present on residues serine 6 and serine 26.

Belongs to the Refilin family. As to quaternary structure, interacts with FLNA and FLNB.

The protein resides in the cytoplasm. The protein localises to the cytoskeleton. Functionally, involved in the regulation of the perinuclear actin network and nuclear shape through interaction with filamins. Plays an essential role in the formation of cartilaginous skeletal elements. This Homo sapiens (Human) protein is Refilin-B.